The following is a 257-amino-acid chain: UPF0246 protein HAPS_0280 (257 aa).

Belongs to the UPF0246 family.

This chain is UPF0246 protein HAPS_0280, found in Glaesserella parasuis serovar 5 (strain SH0165) (Haemophilus parasuis).